Reading from the N-terminus, the 440-residue chain is uncharacterized protein (440 aa).

The N-terminal stretch at 1-19 (MKKLLLAASIVYFASACLA) is a signal peptide.

This is an uncharacterized protein from Rickettsia prowazekii (strain Madrid E).